A 286-amino-acid chain; its full sequence is 4-diphosphocytidyl-2-C-methyl-D-erythritol kinase (286 aa).

K8 is an active-site residue. Position 92–102 (92–102 (PVSAGLAGGST)) interacts with ATP. D134 is a catalytic residue.

The protein belongs to the GHMP kinase family. IspE subfamily.

The enzyme catalyses 4-CDP-2-C-methyl-D-erythritol + ATP = 4-CDP-2-C-methyl-D-erythritol 2-phosphate + ADP + H(+). It participates in isoprenoid biosynthesis; isopentenyl diphosphate biosynthesis via DXP pathway; isopentenyl diphosphate from 1-deoxy-D-xylulose 5-phosphate: step 3/6. Catalyzes the phosphorylation of the position 2 hydroxy group of 4-diphosphocytidyl-2C-methyl-D-erythritol. This Caldicellulosiruptor bescii (strain ATCC BAA-1888 / DSM 6725 / KCTC 15123 / Z-1320) (Anaerocellum thermophilum) protein is 4-diphosphocytidyl-2-C-methyl-D-erythritol kinase.